Reading from the N-terminus, the 233-residue chain is Small ribosomal subunit protein uS3 (233 aa).

Residues 39–107 form the KH type-2 domain; sequence VRQYLTKELA…PAQINIAEVR (69 aa).

This sequence belongs to the universal ribosomal protein uS3 family. Part of the 30S ribosomal subunit. Forms a tight complex with proteins S10 and S14.

Functionally, binds the lower part of the 30S subunit head. Binds mRNA in the 70S ribosome, positioning it for translation. The protein is Small ribosomal subunit protein uS3 of Citrobacter koseri (strain ATCC BAA-895 / CDC 4225-83 / SGSC4696).